Consider the following 217-residue polypeptide: Probable cytidylate kinase (217 aa).

Residue 9–17 (GPAGSGKST) participates in ATP binding.

It belongs to the cytidylate kinase family. Type 1 subfamily.

The catalysed reaction is CMP + ATP = CDP + ADP. It catalyses the reaction dCMP + ATP = dCDP + ADP. This Vairimorpha ceranae (strain BRL01) (Microsporidian parasite) protein is Probable cytidylate kinase.